We begin with the raw amino-acid sequence, 324 residues long: tRNA uridine(34) hydroxylase (324 aa).

The Rhodanese domain maps to 122 to 218 (QENRCLILDV…YGQQVGTGKW (97 aa)). C178 serves as the catalytic Cysteine persulfide intermediate.

Belongs to the TrhO family.

The catalysed reaction is uridine(34) in tRNA + AH2 + O2 = 5-hydroxyuridine(34) in tRNA + A + H2O. Functionally, catalyzes oxygen-dependent 5-hydroxyuridine (ho5U) modification at position 34 in tRNAs. In Chlamydia pneumoniae (Chlamydophila pneumoniae), this protein is tRNA uridine(34) hydroxylase.